An 87-amino-acid polypeptide reads, in one-letter code: U3-theraphotoxin-Hhn1a 10 (87 aa).

The N-terminal stretch at 1 to 24 (MVNMEASMFLTFAGLVLLFVVCYA) is a signal peptide. The propeptide occupies 25–52 (SESEEKEFPKEMLSSIFAVDNDFKQEER). 3 disulfides stabilise this stretch: cysteine 54-cysteine 67, cysteine 61-cysteine 72, and cysteine 66-cysteine 79.

The protein belongs to the neurotoxin 10 (Hwtx-1) family. 51 (Hntx-8) subfamily. Hntx-8 sub-subfamily. In terms of tissue distribution, expressed by the venom gland.

It is found in the secreted. In terms of biological role, ion channel inhibitor. In Cyriopagopus hainanus (Chinese bird spider), this protein is U3-theraphotoxin-Hhn1a 10.